Reading from the N-terminus, the 206-residue chain is MINIALPKGRLVNKVYTLFEKIGYENKELLEDNRKLVFENKDKNVRYLIVKPSDVGIYVEKGVADIGIVGKDILLENNHDVYELLDLKFGKCRVCMASVNGYKEDIERRLRVATKYVNISKNYFNSINRDVEIIKLNGSIELAPILNLSDVIVDIVETGSTLRENNLTVIKEIIDYISARLIVNKVSYKFKNDLIKTIIKNIEEVL.

This sequence belongs to the ATP phosphoribosyltransferase family. Short subfamily. As to quaternary structure, heteromultimer composed of HisG and HisZ subunits.

The protein resides in the cytoplasm. It catalyses the reaction 1-(5-phospho-beta-D-ribosyl)-ATP + diphosphate = 5-phospho-alpha-D-ribose 1-diphosphate + ATP. The protein operates within amino-acid biosynthesis; L-histidine biosynthesis; L-histidine from 5-phospho-alpha-D-ribose 1-diphosphate: step 1/9. Its function is as follows. Catalyzes the condensation of ATP and 5-phosphoribose 1-diphosphate to form N'-(5'-phosphoribosyl)-ATP (PR-ATP). Has a crucial role in the pathway because the rate of histidine biosynthesis seems to be controlled primarily by regulation of HisG enzymatic activity. The polypeptide is ATP phosphoribosyltransferase (Brachyspira hyodysenteriae (strain ATCC 49526 / WA1)).